A 483-amino-acid chain; its full sequence is V-type proton ATPase subunit B 2 (483 aa).

The protein belongs to the ATPase alpha/beta chains family. In terms of assembly, V-ATPase is a heteromultimeric enzyme composed of a peripheral catalytic V1 complex (main components: subunits A, B, C, D, E, and F) attached to an integral membrane V0 proton pore complex (main component: the proteolipid protein).

In terms of biological role, non-catalytic subunit of the peripheral V1 complex of vacuolar ATPase. V-ATPase is responsible for acidifying a variety of intracellular compartments in eukaryotic cells. The polypeptide is V-type proton ATPase subunit B 2 (Hordeum vulgare (Barley)).